Here is a 520-residue protein sequence, read N- to C-terminus: Eukaryotic translation initiation factor 3 subunit L (520 aa).

A PCI domain is found at 278–478 (FATYYYVGIC…ELDIALENDL (201 aa)).

The protein belongs to the eIF-3 subunit L family. As to quaternary structure, component of the eukaryotic translation initiation factor 3 (eIF-3) complex.

The protein localises to the cytoplasm. In terms of biological role, component of the eukaryotic translation initiation factor 3 (eIF-3) complex, which is involved in protein synthesis of a specialized repertoire of mRNAs and, together with other initiation factors, stimulates binding of mRNA and methionyl-tRNAi to the 40S ribosome. The eIF-3 complex specifically targets and initiates translation of a subset of mRNAs involved in cell proliferation. The protein is Eukaryotic translation initiation factor 3 subunit L of Yarrowia lipolytica (strain CLIB 122 / E 150) (Yeast).